A 388-amino-acid chain; its full sequence is Na(+)/H(+) antiporter NhaA (388 aa).

Transmembrane regions (helical) follow at residues 14–34 (GGII…MGAT), 59–79 (MLLW…GLEV), 95–115 (VFPV…YLAF), 125–145 (GWAI…ALLG), 154–174 (IFLM…IALF), 179–199 (LSIV…LLNL), 219–239 (VLKS…FIPL), 254–274 (ILHP…NAGV), 292–312 (IIAG…WLAL), 328–348 (IMAV…IASL), and 356–376 (ALIN…AVVG).

It belongs to the NhaA Na(+)/H(+) (TC 2.A.33) antiporter family.

It localises to the cell inner membrane. The catalysed reaction is Na(+)(in) + 2 H(+)(out) = Na(+)(out) + 2 H(+)(in). Its function is as follows. Na(+)/H(+) antiporter that extrudes sodium in exchange for external protons. The protein is Na(+)/H(+) antiporter NhaA of Salmonella arizonae (strain ATCC BAA-731 / CDC346-86 / RSK2980).